The sequence spans 263 residues: Probable WRKY transcription factor 62 (263 aa).

Residues 59–104 (DHQDDQSNNSSPQDSSPVLESSRKPLHKRGRKTSMAESSDYHRHES) are disordered. A compositionally biased stretch (low complexity) spans 64–74 (QSNNSSPQDSS). A DNA-binding region (WRKY) is located at residues 104 to 174 (SSTPIYHDGF…GQHICQLHQA (71 aa)).

This sequence belongs to the WRKY group III family.

The protein resides in the nucleus. Transcription factor. Interacts specifically with the W box (5'-(T)TGAC[CT]-3'), a frequently occurring elicitor-responsive cis-acting element. The protein is Probable WRKY transcription factor 62 (WRKY62) of Arabidopsis thaliana (Mouse-ear cress).